A 413-amino-acid polypeptide reads, in one-letter code: Putative F-box/kelch-repeat protein At3g22870 (413 aa).

Residues 2–53 (TLTISDLPRDLKKKIFSRIPLRYVRALRLTCKEWETLIKSRSLKIDEEESQM) enclose the F-box domain. 2 Kelch repeats span residues 156 to 202 (LLRF…IGVS) and 331 to 379 (KVFI…RRRQ).

The sequence is that of Putative F-box/kelch-repeat protein At3g22870 from Arabidopsis thaliana (Mouse-ear cress).